A 115-amino-acid polypeptide reads, in one-letter code: Chondroitin proteoglycan 8 (115 aa).

A signal peptide spans 1–16; the sequence is MRPFILLALLVSVTVA. The disordered stretch occupies residues 33–96; that stretch reads VRRTTRDASD…GSGAAEVTSV (64 aa). O-linked (Xyl...) (chondroitin sulfate) serine glycans are attached at residues serine 61, serine 63, serine 84, serine 88, and serine 109.

The polypeptide is Chondroitin proteoglycan 8 (Caenorhabditis elegans).